Here is a 177-residue protein sequence, read N- to C-terminus: Endoribonuclease YbeY (177 aa).

Positions 114, 118, and 124 each coordinate Zn(2+). The tract at residues Ser154 to Glu177 is disordered. Positions Gln168–Glu177 are enriched in polar residues.

This sequence belongs to the endoribonuclease YbeY family. Zn(2+) is required as a cofactor.

Its subcellular location is the cytoplasm. In terms of biological role, single strand-specific metallo-endoribonuclease involved in late-stage 70S ribosome quality control and in maturation of the 3' terminus of the 16S rRNA. The polypeptide is Endoribonuclease YbeY (Cellvibrio japonicus (strain Ueda107) (Pseudomonas fluorescens subsp. cellulosa)).